The chain runs to 241 residues: Small ribosomal subunit protein uS3 (241 aa).

Residues 39–107 (IREILHKELK…DVVINIVEIR (69 aa)) enclose the KH type-2 domain. A disordered region spans residues 217-241 (KRMAEGETGGGGDRGGRQRRDNAAV). Over residues 230 to 241 (RGGRQRRDNAAV) the composition is skewed to basic and acidic residues.

Belongs to the universal ribosomal protein uS3 family. As to quaternary structure, part of the 30S ribosomal subunit. Forms a tight complex with proteins S10 and S14.

In terms of biological role, binds the lower part of the 30S subunit head. Binds mRNA in the 70S ribosome, positioning it for translation. In Bradyrhizobium diazoefficiens (strain JCM 10833 / BCRC 13528 / IAM 13628 / NBRC 14792 / USDA 110), this protein is Small ribosomal subunit protein uS3.